A 171-amino-acid chain; its full sequence is Nicotinamide-nucleotide adenylyltransferase (171 aa).

The protein belongs to the archaeal NMN adenylyltransferase family.

It localises to the cytoplasm. The enzyme catalyses beta-nicotinamide D-ribonucleotide + ATP + H(+) = diphosphate + NAD(+). It participates in cofactor biosynthesis; NAD(+) biosynthesis; NAD(+) from nicotinamide D-ribonucleotide: step 1/1. In Ignicoccus hospitalis (strain KIN4/I / DSM 18386 / JCM 14125), this protein is Nicotinamide-nucleotide adenylyltransferase.